We begin with the raw amino-acid sequence, 365 residues long: Forkhead box protein H1 (365 aa).

The segment at 1 to 29 is disordered; the sequence is MGPCSGSRLGPPEAESPSQPPKRRKKRYL. A DNA-binding region (fork-head) is located at residues 32 to 128; that stretch reads DKPPYTYLAM…ALRLQNTALC (97 aa). The tract at residues 151–215 is disordered; that stretch reads GRPYRPPSPP…TPPLPSSERP (65 aa). Residues 154 to 164 are compositionally biased toward pro residues; the sequence is YRPPSPPPPPS. The SMAD-interaction domain (SID) stretch occupies residues 273 to 354; it reads LWGQLPTSYL…VSHPRDLAAP (82 aa). The short motif at 277-281 is the Fast/FoxH1 motif 1 (FM1) element; the sequence is LPTSY. Positions 287–293 match the Fast/FoxH1 motif 2 (FM2) motif; that stretch reads PNVVMPL. Positions 327 to 348 match the SMAD interaction motif (SIM) motif; sequence LDALFQGVPPNKSIYDVWVSHP.

As to quaternary structure, interacts with the MH2 domains of SMAD2 and SMAD3. As to expression, ubiquitous.

The protein resides in the nucleus. Transcriptional activator. Recognizes and binds to the DNA sequence 5'-TGT[GT][GT]ATT-3'. Required for induction of the goosecoid (GSC) promoter by TGF-beta or activin signaling. Forms a transcriptionally active complex containing FOXH1/SMAD2/SMAD4 on a site on the GSC promoter called TARE (TGF-beta/activin response element). The polypeptide is Forkhead box protein H1 (FOXH1) (Homo sapiens (Human)).